A 351-amino-acid polypeptide reads, in one-letter code: UDP-N-acetylglucosamine--N-acetylmuramyl-(pentapeptide) pyrophosphoryl-undecaprenol N-acetylglucosamine transferase (351 aa).

Residues 12-14 (TGG), N124, R160, S188, I239, 258-263 (ALTVCE), and Q283 contribute to the UDP-N-acetyl-alpha-D-glucosamine site.

The protein belongs to the glycosyltransferase 28 family. MurG subfamily.

Its subcellular location is the cell inner membrane. The enzyme catalyses di-trans,octa-cis-undecaprenyl diphospho-N-acetyl-alpha-D-muramoyl-L-alanyl-D-glutamyl-meso-2,6-diaminopimeloyl-D-alanyl-D-alanine + UDP-N-acetyl-alpha-D-glucosamine = di-trans,octa-cis-undecaprenyl diphospho-[N-acetyl-alpha-D-glucosaminyl-(1-&gt;4)]-N-acetyl-alpha-D-muramoyl-L-alanyl-D-glutamyl-meso-2,6-diaminopimeloyl-D-alanyl-D-alanine + UDP + H(+). It functions in the pathway cell wall biogenesis; peptidoglycan biosynthesis. Functionally, cell wall formation. Catalyzes the transfer of a GlcNAc subunit on undecaprenyl-pyrophosphoryl-MurNAc-pentapeptide (lipid intermediate I) to form undecaprenyl-pyrophosphoryl-MurNAc-(pentapeptide)GlcNAc (lipid intermediate II). This chain is UDP-N-acetylglucosamine--N-acetylmuramyl-(pentapeptide) pyrophosphoryl-undecaprenol N-acetylglucosamine transferase, found in Actinobacillus pleuropneumoniae serotype 7 (strain AP76).